The sequence spans 1016 residues: Calmodulin-binding transcription activator 4 (1016 aa).

The CG-1 DNA-binding region spans isoleucine 38–glycine 164. The disordered stretch occupies residues lysine 324–serine 343. Residues glycine 328–aspartate 338 are compositionally biased toward gly residues. 3 ANK repeats span residues glutamine 647–phenylalanine 676, lysine 680–alanine 709, and asparagine 719–leucine 748. Positions leucine 753–valine 786 are disordered. Polar residues predominate over residues aspartate 761 to glutamine 785. IQ domains lie at alanine 798–cysteine 827, tyrosine 855–lysine 884, and leucine 878–isoleucine 907. The tract at residues tryptophan 903 to phenylalanine 925 is calmodulin-binding. Serine 935 and serine 962 each carry phosphoserine.

The protein belongs to the CAMTA family. In terms of tissue distribution, expressed in roots, stems, leaves, flowers and siliques.

It is found in the nucleus. Functionally, transcription activator that binds to the DNA consensus sequence 5'-[ACG]CGCG[GTC]-3'. Regulates transcriptional activity in response to calcium signals. Binds calmodulin in a calcium-dependent manner. Involved together with CAMTA2 and CAMTA3 in the positive regulation of a general stress response. This chain is Calmodulin-binding transcription activator 4, found in Arabidopsis thaliana (Mouse-ear cress).